Reading from the N-terminus, the 259-residue chain is UPF0246 protein PFL_1025 (259 aa).

The protein belongs to the UPF0246 family.

The sequence is that of UPF0246 protein PFL_1025 from Pseudomonas fluorescens (strain ATCC BAA-477 / NRRL B-23932 / Pf-5).